The chain runs to 463 residues: Dihydrolipoyllysine-residue succinyltransferase component of 2-oxoglutarate dehydrogenase complex, mitochondrial (463 aa).

One can recognise a Lipoyl-binding domain in the interval Ser-73–Glu-148. An N6-lipoyllysine modification is found at Lys-114. The tract at residues Leu-144 to Arg-237 is disordered. Residues Glu-148–Ser-157 are compositionally biased toward low complexity. Basic and acidic residues predominate over residues Thr-184 to Lys-212. A run of 3 repeats spans residues Ala-185 to Ala-190, Ala-191 to Ala-196, and Ala-197 to Val-202. The segment at Ala-185–Asp-209 is 4 X 6 AA approximate tandem repeats of A-[SP]-K-K-E-[AV]. The stretch at Glu-204 to Asp-209 is one 4; approximate repeat. Position 340 is a phosphothreonine (Thr-340). Active-site residues include His-435 and Asp-439.

Belongs to the 2-oxoacid dehydrogenase family. In terms of assembly, component of the 2-oxoglutarate dehydrogenase complex (OGDC), also called alpha-ketoglutarate dehydrogenase (KGDH) complex. The copmplex is composed of the catalytic subunits OGDH (2-oxoglutarate dehydrogenase KGD1; also called E1 subunit), DLST (dihydrolipoamide succinyltransferase KGD2; also called E2 subunit) and DLD (dihydrolipoamide dehydrogenase LPD1; also called E3 subunit), and the assembly factor KGD4. (R)-lipoate is required as a cofactor.

It is found in the mitochondrion. The enzyme catalyses N(6)-[(R)-dihydrolipoyl]-L-lysyl-[protein] + succinyl-CoA = N(6)-[(R)-S(8)-succinyldihydrolipoyl]-L-lysyl-[protein] + CoA. It participates in amino-acid degradation; L-lysine degradation via saccharopine pathway; glutaryl-CoA from L-lysine: step 6/6. Functionally, the 2-oxoglutarate dehydrogenase complex catalyzes the overall conversion of 2-oxoglutarate to succinyl-CoA and CO(2). It contains multiple copies of three enzymatic components: 2-oxoglutarate dehydrogenase (E1), dihydrolipoamide succinyltransferase (E2) and lipoamide dehydrogenase (E3). In Saccharomyces cerevisiae (strain ATCC 204508 / S288c) (Baker's yeast), this protein is Dihydrolipoyllysine-residue succinyltransferase component of 2-oxoglutarate dehydrogenase complex, mitochondrial (KGD2).